The chain runs to 248 residues: 4-hydroxy-tetrahydrodipicolinate reductase (248 aa).

13 to 18 provides a ligand contact to NAD(+); it reads GITGRL. Arg36 contributes to the NADP(+) binding site. NAD(+)-binding positions include 84–86 and 108–111; these read GTT and AANF. The active-site Proton donor/acceptor is the His140. His141 is a binding site for (S)-2,3,4,5-tetrahydrodipicolinate. Lys144 functions as the Proton donor in the catalytic mechanism. 150 to 151 is a binding site for (S)-2,3,4,5-tetrahydrodipicolinate; that stretch reads GT.

This sequence belongs to the DapB family.

It localises to the cytoplasm. The catalysed reaction is (S)-2,3,4,5-tetrahydrodipicolinate + NAD(+) + H2O = (2S,4S)-4-hydroxy-2,3,4,5-tetrahydrodipicolinate + NADH + H(+). It catalyses the reaction (S)-2,3,4,5-tetrahydrodipicolinate + NADP(+) + H2O = (2S,4S)-4-hydroxy-2,3,4,5-tetrahydrodipicolinate + NADPH + H(+). It participates in amino-acid biosynthesis; L-lysine biosynthesis via DAP pathway; (S)-tetrahydrodipicolinate from L-aspartate: step 4/4. Its function is as follows. Catalyzes the conversion of 4-hydroxy-tetrahydrodipicolinate (HTPA) to tetrahydrodipicolinate. The sequence is that of 4-hydroxy-tetrahydrodipicolinate reductase from Gluconobacter oxydans (strain 621H) (Gluconobacter suboxydans).